Reading from the N-terminus, the 159-residue chain is MKLNELRDNEGARYQSKRLGRGIGSGKGKTSGKGVKGQTSRTGVAINGFEGGQMPIYRRLPKRGFHNPNAKHFAVINLGRLQKAIDEKRIDAKATITAEILSAAGLIGKVLDGVRLLGHGEIKAKVSIEVTGASAAAIAAVEKAGGSVTVAAPKAVAEG.

The segment covering 1 to 11 (MKLNELRDNEG) has biased composition (basic and acidic residues). A disordered region spans residues 1-40 (MKLNELRDNEGARYQSKRLGRGIGSGKGKTSGKGVKGQTS). Residues 21–35 (RGIGSGKGKTSGKGV) show a composition bias toward gly residues.

Belongs to the universal ribosomal protein uL15 family. As to quaternary structure, part of the 50S ribosomal subunit.

Its function is as follows. Binds to the 23S rRNA. The protein is Large ribosomal subunit protein uL15 of Paramagnetospirillum magneticum (strain ATCC 700264 / AMB-1) (Magnetospirillum magneticum).